The primary structure comprises 295 residues: Keratin-like protein KRT222 (295 aa).

The 150-residue stretch at 1-150 (MELSQLLNEI…HLLEKEEIRY (150 aa)) folds into the IF rod domain. The stretch at 2-150 (ELSQLLNEIR…HLLEKEEIRY (149 aa)) forms a coiled coil.

It belongs to the intermediate filament family.

The protein is Keratin-like protein KRT222 (KRT222) of Homo sapiens (Human).